The sequence spans 356 residues: NADH-quinone oxidoreductase subunit H (356 aa).

Helical transmembrane passes span 18 to 38, 87 to 107, 120 to 140, 166 to 186, 202 to 222, 265 to 285, 292 to 312, and 328 to 348; these read IVMVAQSVLLLVVLLIAIAYI, GVFLLAPLVTCVLALAAWAVI, VGILYIFAISSLSIYGIIMAG, IGFVFITVLLCAGSLNLSAIV, WLTFLNWYWLPLLPMFVVFYV, AITTMCAMGAILFMGGWLPPI, WVPGVIWFSLKLFFMFFLFAM, and LGWKVFLPLSLAMVVIVAGVL.

It belongs to the complex I subunit 1 family. In terms of assembly, NDH-1 is composed of 14 different subunits. Subunits NuoA, H, J, K, L, M, N constitute the membrane sector of the complex.

It localises to the cell inner membrane. The catalysed reaction is a quinone + NADH + 5 H(+)(in) = a quinol + NAD(+) + 4 H(+)(out). In terms of biological role, NDH-1 shuttles electrons from NADH, via FMN and iron-sulfur (Fe-S) centers, to quinones in the respiratory chain. The immediate electron acceptor for the enzyme in this species is believed to be ubiquinone. Couples the redox reaction to proton translocation (for every two electrons transferred, four hydrogen ions are translocated across the cytoplasmic membrane), and thus conserves the redox energy in a proton gradient. This subunit may bind ubiquinone. This Nitrobacter hamburgensis (strain DSM 10229 / NCIMB 13809 / X14) protein is NADH-quinone oxidoreductase subunit H.